Reading from the N-terminus, the 809-residue chain is Eukaryotic translation initiation factor 3 subunit C (809 aa).

Residues 1 to 102 (MSRFFAASYE…DSDESDEASK (102 aa)) are disordered. 2 stretches are compositionally biased toward acidic residues: residues 18–30 (SEEDLLSSSEEEL) and 37–59 (SEEESDDSFFNDSESESDFDSDD). Residues 605–780 (FHEHINLDLI…SVLSIAKGAE (176 aa)) form the PCI domain.

This sequence belongs to the eIF-3 subunit C family. Component of the eukaryotic translation initiation factor 3 (eIF-3) complex.

The protein localises to the cytoplasm. Functionally, component of the eukaryotic translation initiation factor 3 (eIF-3) complex, which is involved in protein synthesis of a specialized repertoire of mRNAs and, together with other initiation factors, stimulates binding of mRNA and methionyl-tRNAi to the 40S ribosome. The eIF-3 complex specifically targets and initiates translation of a subset of mRNAs involved in cell proliferation. This Vanderwaltozyma polyspora (strain ATCC 22028 / DSM 70294 / BCRC 21397 / CBS 2163 / NBRC 10782 / NRRL Y-8283 / UCD 57-17) (Kluyveromyces polysporus) protein is Eukaryotic translation initiation factor 3 subunit C.